Here is a 290-residue protein sequence, read N- to C-terminus: Protein MGF 110-9L (290 aa).

3 helical membrane passes run 1–19 (MKVIVLLLVLAVMQPVIQS), 128–148 (VENIKHTCLCMIATIALIGYI), and 163–183 (LLIFLGLYVLLGILMTNIIMN). N-linked (GlcNAc...) asparagine; by host glycans are attached at residues Asn-242 and Asn-267.

The protein belongs to the asfivirus MGF 110 family.

It is found in the host membrane. Plays a role in virus cell tropism, and may be required for efficient virus replication in macrophages. The polypeptide is Protein MGF 110-9L (Ornithodoros (relapsing fever ticks)).